Reading from the N-terminus, the 127-residue chain is Putative truncated L-serine dehydratase YIL168W (127 aa).

Lysine 39 is modified (N6-(pyridoxal phosphate)lysine).

The protein belongs to the serine/threonine dehydratase family. The cofactor is pyridoxal 5'-phosphate.

Its subcellular location is the cytoplasm. It carries out the reaction L-serine = pyruvate + NH4(+). It participates in carbohydrate biosynthesis; gluconeogenesis. The sequence is that of Putative truncated L-serine dehydratase YIL168W from Saccharomyces cerevisiae (strain ATCC 204508 / S288c) (Baker's yeast).